The following is a 389-amino-acid chain: Lipid-A-disaccharide synthase (389 aa).

This sequence belongs to the LpxB family.

The catalysed reaction is a lipid X + a UDP-2-N,3-O-bis[(3R)-3-hydroxyacyl]-alpha-D-glucosamine = a lipid A disaccharide + UDP + H(+). It participates in bacterial outer membrane biogenesis; LPS lipid A biosynthesis. Its function is as follows. Condensation of UDP-2,3-diacylglucosamine and 2,3-diacylglucosamine-1-phosphate to form lipid A disaccharide, a precursor of lipid A, a phosphorylated glycolipid that anchors the lipopolysaccharide to the outer membrane of the cell. This chain is Lipid-A-disaccharide synthase, found in Burkholderia orbicola (strain MC0-3).